Consider the following 214-residue polypeptide: tRNA (guanine-N(7)-)-methyltransferase (214 aa).

Positions 44, 69, 96, and 118 each coordinate S-adenosyl-L-methionine. Residue aspartate 118 is part of the active site. Residue lysine 122 coordinates substrate. An interaction with RNA region spans residues 124 to 129 (RHEKRR). Residues aspartate 154 and 192 to 195 (TEYE) contribute to the substrate site.

The protein belongs to the class I-like SAM-binding methyltransferase superfamily. TrmB family.

The catalysed reaction is guanosine(46) in tRNA + S-adenosyl-L-methionine = N(7)-methylguanosine(46) in tRNA + S-adenosyl-L-homocysteine. It functions in the pathway tRNA modification; N(7)-methylguanine-tRNA biosynthesis. Its function is as follows. Catalyzes the formation of N(7)-methylguanine at position 46 (m7G46) in tRNA. In Lactiplantibacillus plantarum (strain ATCC BAA-793 / NCIMB 8826 / WCFS1) (Lactobacillus plantarum), this protein is tRNA (guanine-N(7)-)-methyltransferase.